The chain runs to 211 residues: MRTLVVDHPLVAHKLTVLRDKNTPSPVFRQLTEELVTLLAYEATREVKTQPVEIETPVTKTVGTAFTKPTPLVVPILRAGLGMLEGMTKLVPTAEVGFLGMARDEETLDIITYAERLPEDLTGRQIFVLDPMLATGGTLREAIKFLFKRGASDVTCICLLAAPEGLSKLEEELSDANVKIVLASIDEKLNEKSYIVPGLGDAGDRLYGVAG.

5-phospho-alpha-D-ribose 1-diphosphate is bound by residues Arg78, Arg103, and 130-138 (DPMLATGGT). Uracil contacts are provided by residues Ile195 and 200–202 (GDA). Asp201 is a 5-phospho-alpha-D-ribose 1-diphosphate binding site.

Belongs to the UPRTase family. Mg(2+) is required as a cofactor.

It carries out the reaction UMP + diphosphate = 5-phospho-alpha-D-ribose 1-diphosphate + uracil. It functions in the pathway pyrimidine metabolism; UMP biosynthesis via salvage pathway; UMP from uracil: step 1/1. With respect to regulation, allosterically activated by GTP. Functionally, catalyzes the conversion of uracil and 5-phospho-alpha-D-ribose 1-diphosphate (PRPP) to UMP and diphosphate. This chain is Uracil phosphoribosyltransferase, found in Paenarthrobacter aurescens (strain TC1).